Reading from the N-terminus, the 458-residue chain is NADH-ubiquinone oxidoreductase chain 4 (458 aa).

12 consecutive transmembrane segments (helical) span residues 21-43 (ASLW…QWLN), 58-78 (IDQI…LMLL), 93-112 (RTFI…AFSA), 116-138 (TLFY…RWGN), 145-165 (AGIY…VTIL), 196-216 (GLAL…HLWL), 224-244 (PIAG…YGIM), 257-277 (LSYP…SICL), 285-305 (LIAY…MIQT), 309-329 (FSGA…LFCL), 341-361 (ILLL…WWLL), and 379-399 (LTIM…TGLA).

It belongs to the complex I subunit 4 family.

It is found in the mitochondrion membrane. The enzyme catalyses a ubiquinone + NADH + 5 H(+)(in) = a ubiquinol + NAD(+) + 4 H(+)(out). In terms of biological role, core subunit of the mitochondrial membrane respiratory chain NADH dehydrogenase (Complex I) that is believed to belong to the minimal assembly required for catalysis. Complex I functions in the transfer of electrons from NADH to the respiratory chain. The immediate electron acceptor for the enzyme is believed to be ubiquinone. This is NADH-ubiquinone oxidoreductase chain 4 (MT-ND4) from Struthio camelus (Common ostrich).